The following is a 205-amino-acid chain: Protein N-terminal glutamine amidohydrolase (205 aa).

Residues Cys20, His74, and Asp90 contribute to the active site.

It belongs to the NTAQ1 family. In terms of assembly, monomer.

The enzyme catalyses N-terminal L-glutaminyl-[protein] + H2O = N-terminal L-glutamyl-[protein] + NH4(+). Its function is as follows. Mediates the side-chain deamidation of N-terminal glutamine residues to glutamate, an important step in N-end rule pathway of protein degradation. Conversion of the resulting N-terminal glutamine to glutamate renders the protein susceptible to arginylation, polyubiquitination and degradation as specified by the N-end rule. Does not act on substrates with internal or C-terminal glutamine and does not act on non-glutamine residues in any position. This chain is Protein N-terminal glutamine amidohydrolase (tun), found in Drosophila ananassae (Fruit fly).